The following is a 166-amino-acid chain: Large ribosomal subunit protein uL10 (166 aa).

It belongs to the universal ribosomal protein uL10 family. In terms of assembly, part of the ribosomal stalk of the 50S ribosomal subunit. The N-terminus interacts with L11 and the large rRNA to form the base of the stalk. The C-terminus forms an elongated spine to which L12 dimers bind in a sequential fashion forming a multimeric L10(L12)X complex.

Its function is as follows. Forms part of the ribosomal stalk, playing a central role in the interaction of the ribosome with GTP-bound translation factors. This chain is Large ribosomal subunit protein uL10, found in Streptococcus equi subsp. zooepidemicus (strain MGCS10565).